Here is a 330-residue protein sequence, read N- to C-terminus: Biotin synthase (330 aa).

Positions 53-276 (NNIRLNVLLS…VFPFKELRLS (224 aa)) constitute a Radical SAM core domain. [4Fe-4S] cluster is bound by residues cysteine 68, cysteine 72, and cysteine 75. [2Fe-2S] cluster is bound by residues cysteine 112, cysteine 144, cysteine 204, and arginine 274.

This sequence belongs to the radical SAM superfamily. Biotin synthase family. Homodimer. [4Fe-4S] cluster serves as cofactor. [2Fe-2S] cluster is required as a cofactor.

The catalysed reaction is (4R,5S)-dethiobiotin + (sulfur carrier)-SH + 2 reduced [2Fe-2S]-[ferredoxin] + 2 S-adenosyl-L-methionine = (sulfur carrier)-H + biotin + 2 5'-deoxyadenosine + 2 L-methionine + 2 oxidized [2Fe-2S]-[ferredoxin]. Its pathway is cofactor biosynthesis; biotin biosynthesis; biotin from 7,8-diaminononanoate: step 2/2. Catalyzes the conversion of dethiobiotin (DTB) to biotin by the insertion of a sulfur atom into dethiobiotin via a radical-based mechanism. This Streptococcus agalactiae serotype III (strain NEM316) protein is Biotin synthase.